The sequence spans 452 residues: UDP-N-acetylmuramoyl-tripeptide--D-alanyl-D-alanine ligase (452 aa).

ATP is bound at residue Gly-107–Ser-113.

This sequence belongs to the MurCDEF family. MurF subfamily. Monomer.

It is found in the cytoplasm. The catalysed reaction is D-alanyl-D-alanine + UDP-N-acetyl-alpha-D-muramoyl-L-alanyl-gamma-D-glutamyl-meso-2,6-diaminopimelate + ATP = UDP-N-acetyl-alpha-D-muramoyl-L-alanyl-gamma-D-glutamyl-meso-2,6-diaminopimeloyl-D-alanyl-D-alanine + ADP + phosphate + H(+). Its pathway is cell wall biogenesis; peptidoglycan biosynthesis. In terms of biological role, involved in cell wall formation. Catalyzes the final step in the synthesis of UDP-N-acetylmuramoyl-pentapeptide, the precursor of murein. The protein is UDP-N-acetylmuramoyl-tripeptide--D-alanyl-D-alanine ligase of Escherichia coli (strain K12).